The primary structure comprises 541 residues: ATP synthase subunit alpha (541 aa).

169 to 176 (GDRQTGKT) serves as a coordination point for ATP. The tract at residues 506-541 (NTLLNVEEGDTGEEENNEGHNKAEQDTEEKDTEEVV) is disordered. Acidic residues-rich tracts occupy residues 512–521 (EEGDTGEEEN) and 531–541 (DTEEKDTEEVV).

The protein belongs to the ATPase alpha/beta chains family. In terms of assembly, F-type ATPases have 2 components, CF(1) - the catalytic core - and CF(0) - the membrane proton channel. CF(1) has five subunits: alpha(3), beta(3), gamma(1), delta(1), epsilon(1). CF(0) has three main subunits: a(1), b(2) and c(9-12). The alpha and beta chains form an alternating ring which encloses part of the gamma chain. CF(1) is attached to CF(0) by a central stalk formed by the gamma and epsilon chains, while a peripheral stalk is formed by the delta and b chains.

Its subcellular location is the cell inner membrane. It catalyses the reaction ATP + H2O + 4 H(+)(in) = ADP + phosphate + 5 H(+)(out). Its function is as follows. Produces ATP from ADP in the presence of a proton gradient across the membrane. The alpha chain is a regulatory subunit. The sequence is that of ATP synthase subunit alpha from Halothermothrix orenii (strain H 168 / OCM 544 / DSM 9562).